The following is a 362-amino-acid chain: Probable dual-specificity RNA methyltransferase RlmN (362 aa).

The Proton acceptor role is filled by Glu91. Residues 97–329 (QHYGLSVCVT…KKNGVNCVVR (233 aa)) enclose the Radical SAM core domain. The cysteines at positions 104 and 340 are disulfide-linked. [4Fe-4S] cluster is bound by residues Cys111, Cys115, and Cys118. Residues 163 to 164 (GE), Ser195, 218 to 220 (SLH), and Asn296 each bind S-adenosyl-L-methionine. The active-site S-methylcysteine intermediate is Cys340.

It belongs to the radical SAM superfamily. RlmN family. [4Fe-4S] cluster is required as a cofactor.

The protein resides in the cytoplasm. It carries out the reaction adenosine(2503) in 23S rRNA + 2 reduced [2Fe-2S]-[ferredoxin] + 2 S-adenosyl-L-methionine = 2-methyladenosine(2503) in 23S rRNA + 5'-deoxyadenosine + L-methionine + 2 oxidized [2Fe-2S]-[ferredoxin] + S-adenosyl-L-homocysteine. The enzyme catalyses adenosine(37) in tRNA + 2 reduced [2Fe-2S]-[ferredoxin] + 2 S-adenosyl-L-methionine = 2-methyladenosine(37) in tRNA + 5'-deoxyadenosine + L-methionine + 2 oxidized [2Fe-2S]-[ferredoxin] + S-adenosyl-L-homocysteine. Functionally, specifically methylates position 2 of adenine 2503 in 23S rRNA and position 2 of adenine 37 in tRNAs. This is Probable dual-specificity RNA methyltransferase RlmN from Streptococcus sanguinis (strain SK36).